A 389-amino-acid polypeptide reads, in one-letter code: Putative teichuronic acid biosynthesis glycosyltransferase TuaC (389 aa).

Belongs to the glycosyltransferase group 1 family. Glycosyltransferase 4 subfamily.

It participates in cell wall biogenesis; teichuronic acid biosynthesis. The polypeptide is Putative teichuronic acid biosynthesis glycosyltransferase TuaC (tuaC) (Bacillus subtilis (strain 168)).